Reading from the N-terminus, the 89-residue chain is Large ribosomal subunit protein bL27 (89 aa).

Positions 1–22 (MAHKKGASSSRNGRDSNAQRLG) are disordered. Polar residues predominate over residues 7 to 19 (ASSSRNGRDSNAQ).

It belongs to the bacterial ribosomal protein bL27 family.

This chain is Large ribosomal subunit protein bL27, found in Cutibacterium acnes (strain DSM 16379 / KPA171202) (Propionibacterium acnes).